The chain runs to 160 residues: Lipoprotein signal peptidase (160 aa).

2 helical membrane-spanning segments follow: residues 60–80 (IEWL…AFFI) and 84–104 (LPFL…AGTV). Residues Asp-118 and Asp-132 contribute to the active site. The chain crosses the membrane as a helical span at residues 128–148 (FNIADSCLTVGVIGLLLLYIV).

It belongs to the peptidase A8 family.

The protein resides in the cell membrane. It catalyses the reaction Release of signal peptides from bacterial membrane prolipoproteins. Hydrolyzes -Xaa-Yaa-Zaa-|-(S,diacylglyceryl)Cys-, in which Xaa is hydrophobic (preferably Leu), and Yaa (Ala or Ser) and Zaa (Gly or Ala) have small, neutral side chains.. Its pathway is protein modification; lipoprotein biosynthesis (signal peptide cleavage). This protein specifically catalyzes the removal of signal peptides from prolipoproteins. The sequence is that of Lipoprotein signal peptidase from Dehalococcoides mccartyi (strain CBDB1).